We begin with the raw amino-acid sequence, 121 residues long: Small ribosomal subunit protein bS21m (121 aa).

Residues 1–14 constitute a mitochondrion transit peptide; that stretch reads MNSSYFPGVLGVRW.

The protein belongs to the bacterial ribosomal protein bS21 family. In terms of assembly, component of the mitochondrial small ribosomal subunit (mt-SSU). Mature yeast 74S mitochondrial ribosomes consist of a small (37S) and a large (54S) subunit. The 37S small subunit contains a 15S ribosomal RNA (15S mt-rRNA) and at least 32 different proteins. The 54S large subunit contains a 21S rRNA (21S mt-rRNA) and at least 45 different proteins.

It is found in the mitochondrion. Component of the mitochondrial ribosome (mitoribosome), a dedicated translation machinery responsible for the synthesis of mitochondrial genome-encoded proteins, including at least some of the essential transmembrane subunits of the mitochondrial respiratory chain. The mitoribosomes are attached to the mitochondrial inner membrane and translation products are cotranslationally integrated into the membrane. The polypeptide is Small ribosomal subunit protein bS21m (mrp21) (Schizosaccharomyces pombe (strain 972 / ATCC 24843) (Fission yeast)).